A 688-amino-acid polypeptide reads, in one-letter code: Elongation factor G (688 aa).

The 275-residue stretch at 8–282 folds into the tr-type G domain; sequence DKFRNFGIMA…GVVDYLPSPL (275 aa). Residues 17-24, 81-85, and 135-138 contribute to the GTP site; these read AHIDAGKT, DTPGH, and NKMD.

This sequence belongs to the TRAFAC class translation factor GTPase superfamily. Classic translation factor GTPase family. EF-G/EF-2 subfamily.

It localises to the cytoplasm. Catalyzes the GTP-dependent ribosomal translocation step during translation elongation. During this step, the ribosome changes from the pre-translocational (PRE) to the post-translocational (POST) state as the newly formed A-site-bound peptidyl-tRNA and P-site-bound deacylated tRNA move to the P and E sites, respectively. Catalyzes the coordinated movement of the two tRNA molecules, the mRNA and conformational changes in the ribosome. This is Elongation factor G from Clostridium beijerinckii (strain ATCC 51743 / NCIMB 8052) (Clostridium acetobutylicum).